A 722-amino-acid chain; its full sequence is Biotin--protein ligase (722 aa).

The interval 27-93 (KELGKASDKQ…EPAADGDPGL (67 aa)) is disordered. Low complexity predominate over residues 46–55 (ASPEAQPAQG). Phosphoserine is present on serine 295. The 190-residue stretch at 459–648 (TRLGKVILFA…VLEKLIDRFQ (190 aa)) folds into the BPL/LPL catalytic domain.

Belongs to the biotin--protein ligase family. As to quaternary structure, monomer.

The protein localises to the cytoplasm. The protein resides in the mitochondrion. It catalyses the reaction apo-[methylmalonyl-CoA:pyruvate carboxytransferase] + biotin + ATP = holo-[methylmalonyl-CoA:pyruvate carboxytransferase] + AMP + diphosphate + H(+). The enzyme catalyses apo-[propionyl-CoA:carbon-dioxide ligase (ADP-forming)] + biotin + ATP = holo-[propionyl-CoA:carbon-dioxide ligase (ADP-forming)] + AMP + diphosphate + H(+). It carries out the reaction apo-[3-methylcrotonoyl-CoA:carbon-dioxide ligase (ADP-forming)] + biotin + ATP = holo-[3-methylcrotonoyl-CoA:carbon-dioxide ligase (ADP-forming)] + AMP + diphosphate + H(+). The catalysed reaction is biotin + L-lysyl-[protein] + ATP = N(6)-biotinyl-L-lysyl-[protein] + AMP + diphosphate + H(+). Its function is as follows. Biotin--protein ligase catalyzing the biotinylation of the 4 biotin-dependent carboxylases acetyl-CoA-carboxylase, pyruvate carboxylase, propionyl-CoA carboxylase, and methylcrotonyl-CoA carboxylase. The sequence is that of Biotin--protein ligase from Mus musculus (Mouse).